We begin with the raw amino-acid sequence, 33 residues long: uncharacterized protein (33 aa).

This is an uncharacterized protein from Saccharomyces cerevisiae (strain ATCC 204508 / S288c) (Baker's yeast).